The following is a 516-amino-acid chain: Zinc finger protein 83 (516 aa).

Positions 1 to 20 (MHGRKDDAQKQPVKNQLGLN) are disordered. The C2H2-type 1; degenerate zinc-finger motif lies at 93-115 (YKCSERGKAFHQGLHFTIHQIIH). C2H2-type zinc fingers lie at residues 121 to 143 (FKCD…QRIH), 149 to 171 (YKCN…RRIH), 177 to 199 (YKCN…QRIH), 205 to 227 (YKCN…RTIH), 233 to 255 (YECN…LIIH), 261 to 283 (YRCN…QRIH), 289 to 311 (YKCN…WRIH), 317 to 339 (YKCN…WRIH), 345 to 367 (YKCN…LIIH), 373 to 395 (YKCD…HRIH), 401 to 423 (YKCD…WRIH), 429 to 451 (YKCN…RKIH), 457 to 479 (FKCN…HAIH), and 485 to 507 (FKCN…QRFH).

The protein belongs to the krueppel C2H2-type zinc-finger protein family.

It localises to the nucleus. In terms of biological role, may be involved in transcriptional regulation. This is Zinc finger protein 83 (ZNF83) from Homo sapiens (Human).